A 370-amino-acid polypeptide reads, in one-letter code: 3 beta-hydroxysteroid dehydrogenase/Delta 5--&gt;4-isomerase (370 aa).

Tyr158 functions as the Proton acceptor in the catalytic mechanism. Lys162 is an NAD(+) binding site.

The protein belongs to the 3-beta-HSD family. Monomer.

The protein localises to the cytoplasm. It catalyses the reaction a 3beta-hydroxy-Delta(5)-steroid + NAD(+) = a 3-oxo-Delta(5)-steroid + NADH + H(+). The catalysed reaction is cholesterol + NAD(+) = cholest-5-en-3-one + NADH + H(+). It carries out the reaction pregnenolone + NAD(+) = pregn-5-ene-3,20-dione + NADH + H(+). The enzyme catalyses 3beta-hydroxyandrost-5-en-17-one + NAD(+) = androst-5-ene-3,17-dione + NADH + H(+). It catalyses the reaction a 3-oxo-Delta(5)-steroid = a 3-oxo-Delta(4)-steroid. The catalysed reaction is cholest-5-en-3-one = cholest-4-en-3-one. It carries out the reaction pregn-5-ene-3,20-dione = progesterone. The enzyme catalyses androst-5-ene-3,17-dione = androst-4-ene-3,17-dione. It functions in the pathway lipid metabolism; steroid biosynthesis. Functionally, 3-beta-HSD is a bifunctional enzyme, that catalyzes the oxidation and isomerization of cholesterol, pregnenolone, and dehydroepiandrosterone (DHEA) into cholest-4-en-3-one, progesterone, and androsterone, respectively. The sequence is that of 3 beta-hydroxysteroid dehydrogenase/Delta 5--&gt;4-isomerase from Mycobacterium tuberculosis (strain CDC 1551 / Oshkosh).